The following is a 536-amino-acid chain: Phosphoenolpyruvate carboxykinase (ATP) (536 aa).

3 residues coordinate substrate: Arg61, Tyr195, and Lys201. ATP contacts are provided by residues Lys201, His220, and 236 to 244; that span reads GLSGTGKTT. Lys201 and His220 together coordinate Mn(2+). Asp257 is a Mn(2+) binding site. ATP-binding residues include Glu285, Arg322, and Thr447. Arg322 provides a ligand contact to substrate.

The protein belongs to the phosphoenolpyruvate carboxykinase (ATP) family. Requires Mn(2+) as cofactor.

Its subcellular location is the cytoplasm. It carries out the reaction oxaloacetate + ATP = phosphoenolpyruvate + ADP + CO2. Its pathway is carbohydrate biosynthesis; gluconeogenesis. In terms of biological role, involved in the gluconeogenesis. Catalyzes the conversion of oxaloacetate (OAA) to phosphoenolpyruvate (PEP) through direct phosphoryl transfer between the nucleoside triphosphate and OAA. The chain is Phosphoenolpyruvate carboxykinase (ATP) from Chelativorans sp. (strain BNC1).